The following is a 71-amino-acid chain: DNA-directed RNA polymerase subunit omega (71 aa).

Belongs to the RNA polymerase subunit omega family. The RNAP catalytic core consists of 2 alpha, 1 beta, 1 beta' and 1 omega subunit. When a sigma factor is associated with the core the holoenzyme is formed, which can initiate transcription.

It carries out the reaction RNA(n) + a ribonucleoside 5'-triphosphate = RNA(n+1) + diphosphate. In terms of biological role, promotes RNA polymerase assembly. Latches the N- and C-terminal regions of the beta' subunit thereby facilitating its interaction with the beta and alpha subunits. The protein is DNA-directed RNA polymerase subunit omega of Campylobacter concisus (strain 13826).